The primary structure comprises 92 residues: UPF0235 protein PYRAB05010 (92 aa).

It belongs to the UPF0235 family.

The chain is UPF0235 protein PYRAB05010 from Pyrococcus abyssi (strain GE5 / Orsay).